We begin with the raw amino-acid sequence, 64 residues long: Large ribosomal subunit protein bL35 (64 aa).

This sequence belongs to the bacterial ribosomal protein bL35 family.

This is Large ribosomal subunit protein bL35 from Shewanella halifaxensis (strain HAW-EB4).